Consider the following 314-residue polypeptide: Nodulation protein D 1 (314 aa).

The 58-residue stretch at 6–63 (LDLNLLVALDALMTERNLTAAARQINLSQPAMSAAIARLRSYFRDELFTMRGRELVPT) folds into the HTH lysR-type domain. A DNA-binding region (H-T-H motif) is located at residues 23 to 42 (LTAAARQINLSQPAMSAAIA).

This sequence belongs to the LysR transcriptional regulatory family.

NodD regulates the expression of the nodABCFE genes which encode other nodulation proteins. NodD is also a negative regulator of its own expression. Binds flavonoids as inducers. This Bradyrhizobium elkanii protein is Nodulation protein D 1 (nodD1).